The following is a 236-amino-acid chain: tRNA (guanine-N(1)-)-methyltransferase (236 aa).

Residues glycine 110 and leucine 129 to leucine 134 each bind S-adenosyl-L-methionine.

The protein belongs to the RNA methyltransferase TrmD family. In terms of assembly, homodimer.

It localises to the cytoplasm. It catalyses the reaction guanosine(37) in tRNA + S-adenosyl-L-methionine = N(1)-methylguanosine(37) in tRNA + S-adenosyl-L-homocysteine + H(+). In terms of biological role, specifically methylates guanosine-37 in various tRNAs. This chain is tRNA (guanine-N(1)-)-methyltransferase, found in Clostridium perfringens (strain SM101 / Type A).